A 382-amino-acid chain; its full sequence is Na(+)/H(+) antiporter NhaA 2 (382 aa).

Transmembrane regions (helical) follow at residues 11–31, 45–65, 91–111, 116–136, 145–165, 171–191, 197–214, 287–307, 324–344, and 353–373; these read FSVPLVAGVVVALFWANLDPA, LSFHFISNELFMTLFFGIAAV, LGGVLGPVLVYLGLNALVGLP, GWGIPTATDIALAWLAARMVF, YLLLLAVADDAIGLAIIALFY, PVVAAWLLLTLLGMLVAWGLG, SYWPYILLGGSLSWIGLH, WLVLVSLLVGKTVGIFGFGLL, LLVAGVVAGTGFTVALFVSGS, and AAAKMGAMFSLAAALIGMLLG.

Belongs to the NhaA Na(+)/H(+) (TC 2.A.33) antiporter family.

Its subcellular location is the cell inner membrane. The catalysed reaction is Na(+)(in) + 2 H(+)(out) = Na(+)(out) + 2 H(+)(in). In terms of biological role, na(+)/H(+) antiporter that extrudes sodium in exchange for external protons. The polypeptide is Na(+)/H(+) antiporter NhaA 2 (Pelobacter propionicus (strain DSM 2379 / NBRC 103807 / OttBd1)).